The primary structure comprises 243 residues: UPF0246 protein SEQ_2141 (243 aa).

The protein belongs to the UPF0246 family.

In Streptococcus equi subsp. equi (strain 4047), this protein is UPF0246 protein SEQ_2141.